Reading from the N-terminus, the 443-residue chain is ATP-dependent protease ATPase subunit HslU (443 aa).

Residues Ile-18, 60 to 65 (GVGKTE), Asp-256, Glu-321, and Arg-393 each bind ATP.

It belongs to the ClpX chaperone family. HslU subfamily. A double ring-shaped homohexamer of HslV is capped on each side by a ring-shaped HslU homohexamer. The assembly of the HslU/HslV complex is dependent on binding of ATP.

It localises to the cytoplasm. ATPase subunit of a proteasome-like degradation complex; this subunit has chaperone activity. The binding of ATP and its subsequent hydrolysis by HslU are essential for unfolding of protein substrates subsequently hydrolyzed by HslV. HslU recognizes the N-terminal part of its protein substrates and unfolds these before they are guided to HslV for hydrolysis. The chain is ATP-dependent protease ATPase subunit HslU from Buchnera aphidicola subsp. Acyrthosiphon pisum (strain APS) (Acyrthosiphon pisum symbiotic bacterium).